The following is a 387-amino-acid chain: uncharacterized protein (387 aa).

This is an uncharacterized protein from Escherichia coli (strain K12).